A 176-amino-acid polypeptide reads, in one-letter code: NAD(P)H-quinone oxidoreductase subunit 6, chloroplastic (176 aa).

5 helical membrane passes run 10–30 (FLLV…VLLT), 32–52 (PIYS…FYIL), 61–81 (AQLL…VMFM), 95–115 (VGSG…ITII), and 152–172 (FFLP…GAIA).

It belongs to the complex I subunit 6 family. In terms of assembly, NDH is composed of at least 16 different subunits, 5 of which are encoded in the nucleus.

It localises to the plastid. The protein localises to the chloroplast thylakoid membrane. It catalyses the reaction a plastoquinone + NADH + (n+1) H(+)(in) = a plastoquinol + NAD(+) + n H(+)(out). The catalysed reaction is a plastoquinone + NADPH + (n+1) H(+)(in) = a plastoquinol + NADP(+) + n H(+)(out). Its function is as follows. NDH shuttles electrons from NAD(P)H:plastoquinone, via FMN and iron-sulfur (Fe-S) centers, to quinones in the photosynthetic chain and possibly in a chloroplast respiratory chain. The immediate electron acceptor for the enzyme in this species is believed to be plastoquinone. Couples the redox reaction to proton translocation, and thus conserves the redox energy in a proton gradient. The protein is NAD(P)H-quinone oxidoreductase subunit 6, chloroplastic (ndhG) of Manihot esculenta (Cassava).